A 67-amino-acid chain; its full sequence is Cold shock-like protein CspE (67 aa).

A CSD domain is found at 5–64; that stretch reads GKVKWFNSEKGFGFIEVEGGNDVFVHFSAITGDGFKSLDEGQEVSFEVEDGNRGPQAKNV.

In terms of assembly, homodimer.

The protein resides in the cytoplasm. Functionally, can bind to ATTGG and CCAAT motifs (Y-box motifs) of single-stranded oligonucleotides. The polypeptide is Cold shock-like protein CspE (cspE) (Bacillus anthracis).